A 417-amino-acid polypeptide reads, in one-letter code: MYRPRSMVSPSRFFNPFMVALIVIITVGLLAMTAGLLIHFLAFDKRAYFYHSNFHILNVDYTEALNSPATHEYRTLSERIESMITDAFRESNLRSEFIRTHVVKLRKEGSGVVADVVMKFRSSKRNNKKAIKTRIQSVLQRLSSSGNLEIAPSNGITSLTDQDTENVLTQECGARPDLITLSEERIIGGTQAETGDWPWQVSLQLNNVHHCGGTLISNLWVLTAAHCFRSYSNPQQWTATFGVSTISPRLRVRVRAILAHAEYNSITRDNDIAVVQLDRPVTFTRNIHRVCLPAATQNIMPDSVAYVTGWGSLTYGGNTVTNLQQGEVRIVSSEVCNEPAGYGGSVLPGMLCAGVRSGAVDACQGDSGGPLVQEDTRRLWFVVGIVSWGYQCGLPNKPGVYTRVTAYRNWIRQQTGI.

Over 1-17 the chain is Cytoplasmic; sequence MYRPRSMVSPSRFFNPF. Residues 18–38 traverse the membrane as a helical; Signal-anchor for type II membrane protein segment; that stretch reads MVALIVIITVGLLAMTAGLLI. Topologically, residues 39–417 are extracellular; that stretch reads HFLAFDKRAY…RNWIRQQTGI (379 aa). The SEA domain maps to 46–162; the sequence is RAYFYHSNFH…SNGITSLTDQ (117 aa). 4 disulfide bridges follow: cysteine 172–cysteine 291, cysteine 211–cysteine 227, cysteine 336–cysteine 352, and cysteine 363–cysteine 392. A Peptidase S1 domain is found at 186 to 416; the sequence is IIGGTQAETG…YRNWIRQQTG (231 aa). Active-site charge relay system residues include histidine 226 and aspartate 271. Catalysis depends on serine 367, which acts as the Charge relay system.

The protein belongs to the peptidase S1 family. As to quaternary structure, monomer. In terms of tissue distribution, isoform 1 and isoform 2 are expressed in the esophagus, tongue and trachea. Isoform 2 is also highly expressed in the adrenal cortex and heart.

The protein resides in the cell membrane. The protein localises to the secreted. In terms of biological role, may play some biological role in the host defense system on the mucous membrane independently of or in cooperation with other substances in airway mucous or bronchial secretions. Plays a role in the proteolytic processing of ACE2. Preferentially cleaves the C-terminal side of arginine residues at the P1 position of certain peptides. Isoform 2 may play a key role in regulating adrenal proliferation by specifically cleaving N-POMC. This is Transmembrane protease serine 11D (Tmprss11d) from Rattus norvegicus (Rat).